Consider the following 250-residue polypeptide: Glycerol uptake facilitator protein-like 5 (250 aa).

2 helical membrane passes run 12–32 (EFFGTLILVLLGNGAVANAFL) and 46–66 (GGWLLVASGYGLGVMLPAMMF). Positions 75-77 (NPA) match the NPA 1 motif. Transmembrane regions (helical) follow at residues 85-105 (IGIFPWAHVAPYLIWQFLGAI), 142-162 (LNGFVTEMVGTAVLIFGAMGL), and 172-192 (IDIANIGVGLLIAAMVISLGG). An NPA 2 motif is present at residues 199–201 (NPA). Residues 230-250 (VVAPIVGAVIGIWIYKIFFGL) traverse the membrane as a helical segment.

Belongs to the MIP/aquaporin (TC 1.A.8) family.

It is found in the cell membrane. Functionally, probable transporter that facilitates the transmembrane diffusion of an unknown substrate. Is not permeable to water, dihydroxyacetone, glycerol, urea, H(2)O(2) and D/L-lactic acid. The protein is Glycerol uptake facilitator protein-like 5 of Lactiplantibacillus plantarum (strain ATCC BAA-793 / NCIMB 8826 / WCFS1) (Lactobacillus plantarum).